The following is a 130-amino-acid chain: Small ribosomal subunit protein uS8 (130 aa).

This sequence belongs to the universal ribosomal protein uS8 family.

The polypeptide is Small ribosomal subunit protein uS8 (rps22) (Agaricus bisporus (White button mushroom)).